Consider the following 85-residue polypeptide: NAD(P)H-quinone oxidoreductase subunit L (85 aa).

The next 2 membrane-spanning stretches (helical) occupy residues 17 to 37 (IVAV…PGFV) and 54 to 74 (AFMY…SPFL).

It belongs to the complex I NdhL subunit family. NDH-1 can be composed of about 15 different subunits; different subcomplexes with different compositions have been identified which probably have different functions.

It localises to the cellular thylakoid membrane. It carries out the reaction a plastoquinone + NADH + (n+1) H(+)(in) = a plastoquinol + NAD(+) + n H(+)(out). The catalysed reaction is a plastoquinone + NADPH + (n+1) H(+)(in) = a plastoquinol + NADP(+) + n H(+)(out). NDH-1 shuttles electrons from an unknown electron donor, via FMN and iron-sulfur (Fe-S) centers, to quinones in the respiratory and/or the photosynthetic chain. The immediate electron acceptor for the enzyme in this species is believed to be plastoquinone. Couples the redox reaction to proton translocation, and thus conserves the redox energy in a proton gradient. Cyanobacterial NDH-1 also plays a role in inorganic carbon-concentration. The chain is NAD(P)H-quinone oxidoreductase subunit L from Crocosphaera subtropica (strain ATCC 51142 / BH68) (Cyanothece sp. (strain ATCC 51142)).